We begin with the raw amino-acid sequence, 29 residues long: Cyclotide cter-N (29 aa).

A cross-link (cyclopeptide (Gly-Asn)) is located at residues 1 to 29; that stretch reads GSAFCGETCVLGTCYTPDCSCTALVCLKN. 3 cysteine pairs are disulfide-bonded: cysteine 5-cysteine 19, cysteine 9-cysteine 21, and cysteine 14-cysteine 26.

This is a cyclic peptide.

The protein localises to the secreted. Its function is as follows. Probably participates in a plant defense mechanism. The protein is Cyclotide cter-N of Clitoria ternatea (Butterfly pea).